We begin with the raw amino-acid sequence, 930 residues long: Protein ARABIDILLO 1 (930 aa).

The Nuclear localization signal motif lies at 3 to 8 (RRVRRK). In terms of domain architecture, F-box spans 44–90 (FVDWISLPYDTVLQLFTCLNYRDRASLASTCKTWRCLGASSCLWTSL). 13 ARM repeats span residues 172-212 (RITS…KHCP), 244-285 (TSNI…TSSQ), 379-418 (PEGLDDFWLNEGAALLLNLMQSSQEDVQERSATGLATFVV), 428-467 (CGRAEAVMKDGGIRLLLELAKSWREGLQSEAAKAIANLSV), 469-508 (ANIAKSVAEEGGIKILAGLAKSMNRLVAEEAAGGLWNLSV), 510-552 (EEHK…NLAA), 554-594 (DKCS…NLAA), 600-639 (NNNAAVGQEAGALEALVQLTKSPHEGVRQEAAGALWNLSF), 641-683 (DKNR…GLSV), 685-724 (EANSVAIGREGGVPPLIALARSEAEDVHETAAGALWNLAF), 726-766 (PGNA…YMFD), 790-831 (LDGA…QVTE), and 835-875 (IQEA…QFTI).

This sequence belongs to the beta-catenin family. In terms of assembly, interacts with SNL1. Interacts with MYB53, MYB92 and MYB93. Expressed ubiquitously, with higher levels in root tip, pericycle and vasculature.

Its subcellular location is the nucleus. Its function is as follows. Promotes lateral root initiation and development, independently of auxin (IAA) and abscisis acid (ABA). In Arabidopsis thaliana (Mouse-ear cress), this protein is Protein ARABIDILLO 1 (FBX5).